A 126-amino-acid polypeptide reads, in one-letter code: Small ribosomal subunit protein uS8 (126 aa).

Belongs to the universal ribosomal protein uS8 family. As to quaternary structure, part of the 30S ribosomal subunit. Contacts proteins S5 and S12.

Functionally, one of the primary rRNA binding proteins, it binds directly to 16S rRNA central domain where it helps coordinate assembly of the platform of the 30S subunit. The sequence is that of Small ribosomal subunit protein uS8 from Nitratidesulfovibrio vulgaris (strain ATCC 29579 / DSM 644 / CCUG 34227 / NCIMB 8303 / VKM B-1760 / Hildenborough) (Desulfovibrio vulgaris).